A 378-amino-acid polypeptide reads, in one-letter code: Mannitol-1-phosphate 5-dehydrogenase (378 aa).

4-15 (SVHFGAGNIGRG) lines the NAD(+) pocket.

Belongs to the mannitol dehydrogenase family.

It carries out the reaction D-mannitol 1-phosphate + NAD(+) = beta-D-fructose 6-phosphate + NADH + H(+). The sequence is that of Mannitol-1-phosphate 5-dehydrogenase from Streptococcus pneumoniae (strain ATCC 700669 / Spain 23F-1).